The sequence spans 344 residues: Arginine N-succinyltransferase (344 aa).

Succinyl-CoA is bound at residue Leu-125. His-229 functions as the Proton donor in the catalytic mechanism.

It belongs to the arginine N-succinyltransferase family.

It catalyses the reaction succinyl-CoA + L-arginine = N(2)-succinyl-L-arginine + CoA + H(+). It functions in the pathway amino-acid degradation; L-arginine degradation via AST pathway; L-glutamate and succinate from L-arginine: step 1/5. Catalyzes the transfer of succinyl-CoA to arginine to produce N(2)-succinylarginine. The chain is Arginine N-succinyltransferase from Escherichia coli O17:K52:H18 (strain UMN026 / ExPEC).